The sequence spans 2594 residues: Protein sevenless (2594 aa).

2 disordered regions span residues 1-34 (MFWR…PKRL) and 49-92 (KMST…RVRR). Residues 1–2141 (MFWREDAAQQ…FVSPEKRGSL (2141 aa)) are Extracellular-facing. Residues 9–26 (QQQQQQQQQQQQQQQQQQ) are compositionally biased toward low complexity. 10 N-linked (GlcNAc...) asparagine glycosylation sites follow: asparagine 77, asparagine 401, asparagine 508, asparagine 532, asparagine 641, asparagine 667, asparagine 778, asparagine 797, asparagine 874, and asparagine 980. 2 Fibronectin type-III domains span residues 358-462 (ETTQ…TPME) and 468-560 (APII…SPLE). The Fibronectin type-III 3 domain occupies 838–938 (PPAPRELRAL…APLATRTWPL (101 aa)). An LDL-receptor class B repeat occupies 1024 to 1066 (GLLYWTDLARDCVQRLDPFSGERELLPIFGARHLALDSAQGHL). 2 Fibronectin type-III domains span residues 1227–1317 (LAVP…QLDT) and 1324–1430 (QPRR…VQSV). N-linked (GlcNAc...) asparagine glycans are attached at residues asparagine 1257, asparagine 1344, asparagine 1382, asparagine 1577, asparagine 1587, asparagine 1665, asparagine 1752, asparagine 1776, asparagine 1824, asparagine 1908, asparagine 1966, and asparagine 2088. Fibronectin type-III domains are found at residues 1711-1814 (TAAA…TLHT), 1821-1920 (APRN…SYAP), 1922-2010 (PPLQ…TLGD), and 2014-2132 (APGR…AEPF). Residues 2142-2162 (VLAIIAPAAIVSSCVLALVLV) traverse the membrane as a helical segment. Residues 2163 to 2594 (RKLQKRRHRA…LYANEGISGL (432 aa)) are Cytoplasmic-facing. Residues 2224–2495 (LTLLRFLGSG…KRCLSTLQAL (272 aa)) form the Protein kinase domain. Residues 2230–2238 (LGSGAFGEV) and lysine 2257 contribute to the ATP site. The active-site Proton acceptor is aspartate 2355. At tyrosine 2391 the chain carries Phosphotyrosine; by autocatalysis. Residues 2543–2568 (TVSTTDADTTGSPTTPTAPTTPTTTT) are disordered. Low complexity predominate over residues 2545–2568 (STTDADTTGSPTTPTAPTTPTTTT).

It belongs to the protein kinase superfamily. Tyr protein kinase family. Insulin receptor subfamily.

The protein localises to the cell membrane. The catalysed reaction is L-tyrosyl-[protein] + ATP = O-phospho-L-tyrosyl-[protein] + ADP + H(+). Receptor for an extracellular signal required to instruct a cell to differentiate into a R7 photoreceptor. The ligand for Sev is the Boss (Bride of Sevenless) protein. The sequence is that of Protein sevenless (sev) from Drosophila virilis (Fruit fly).